The chain runs to 330 residues: DNA-directed RNA polymerase subunit alpha (330 aa).

An alpha N-terminal domain (alpha-NTD) region spans residues 1–236; sequence MQGSVTEFLK…EQLDAFVDLR (236 aa). Residues 250 to 330 form an alpha C-terminal domain (alpha-CTD) region; the sequence is FDPILLRPVD…NWPPASIAED (81 aa).

Belongs to the RNA polymerase alpha chain family. In terms of assembly, homodimer. The RNAP catalytic core consists of 2 alpha, 1 beta, 1 beta' and 1 omega subunit. When a sigma factor is associated with the core the holoenzyme is formed, which can initiate transcription.

The enzyme catalyses RNA(n) + a ribonucleoside 5'-triphosphate = RNA(n+1) + diphosphate. In terms of biological role, DNA-dependent RNA polymerase catalyzes the transcription of DNA into RNA using the four ribonucleoside triphosphates as substrates. This Vibrio atlanticus (strain LGP32) (Vibrio splendidus (strain Mel32)) protein is DNA-directed RNA polymerase subunit alpha.